A 448-amino-acid polypeptide reads, in one-letter code: Probable glycine dehydrogenase (decarboxylating) subunit 1 (448 aa).

This sequence belongs to the GcvP family. N-terminal subunit subfamily. In terms of assembly, the glycine cleavage system is composed of four proteins: P, T, L and H. In this organism, the P 'protein' is a heterodimer of two subunits.

It catalyses the reaction N(6)-[(R)-lipoyl]-L-lysyl-[glycine-cleavage complex H protein] + glycine + H(+) = N(6)-[(R)-S(8)-aminomethyldihydrolipoyl]-L-lysyl-[glycine-cleavage complex H protein] + CO2. Functionally, the glycine cleavage system catalyzes the degradation of glycine. The P protein binds the alpha-amino group of glycine through its pyridoxal phosphate cofactor; CO(2) is released and the remaining methylamine moiety is then transferred to the lipoamide cofactor of the H protein. In Pyrococcus furiosus (strain ATCC 43587 / DSM 3638 / JCM 8422 / Vc1), this protein is Probable glycine dehydrogenase (decarboxylating) subunit 1.